Reading from the N-terminus, the 124-residue chain is Small ribosomal subunit protein uS12 (124 aa).

The segment at 1 to 28 (MPTISQLIGSERKRLTRKTKSPALKSCP) is disordered. Aspartate 89 carries the 3-methylthioaspartic acid modification. Residues 104–124 (TAGVKDRRQSRSKYGAKAPKD) form a disordered region.

The protein belongs to the universal ribosomal protein uS12 family. As to quaternary structure, part of the 30S ribosomal subunit. Contacts proteins S8 and S17. May interact with IF1 in the 30S initiation complex.

With S4 and S5 plays an important role in translational accuracy. Functionally, interacts with and stabilizes bases of the 16S rRNA that are involved in tRNA selection in the A site and with the mRNA backbone. Located at the interface of the 30S and 50S subunits, it traverses the body of the 30S subunit contacting proteins on the other side and probably holding the rRNA structure together. The combined cluster of proteins S8, S12 and S17 appears to hold together the shoulder and platform of the 30S subunit. This chain is Small ribosomal subunit protein uS12, found in Prochlorococcus marinus (strain MIT 9312).